Reading from the N-terminus, the 173-residue chain is MASIPATVATVAQANMVAPFTGLKSNAAFPVTKKVNDFSTLPSNGGRVQCMKVWPPLGKKRYETLSYLPNLTEVQLAKEVDYLLRNKWVPCLEFELEHGFVYRENARSPGYYDGRYWTMWKLPMFGCTDSAQVMKELQECKKEYPQAWIRIIGFDNVRQVQCISFIASKPDGF.

The transit peptide at methionine 1–glutamine 49 directs the protein to the chloroplast.

This sequence belongs to the RuBisCO small chain family. As to quaternary structure, heterohexadecamer of 8 large and 8 small subunits.

The protein resides in the plastid. It is found in the chloroplast. Its function is as follows. RuBisCO catalyzes two reactions: the carboxylation of D-ribulose 1,5-bisphosphate, the primary event in carbon dioxide fixation, as well as the oxidative fragmentation of the pentose substrate. Both reactions occur simultaneously and in competition at the same active site. Although the small subunit is not catalytic it is essential for maximal activity. The polypeptide is Ribulose bisphosphate carboxylase small subunit, chloroplastic 5 (Flaveria pringlei).